We begin with the raw amino-acid sequence, 119 residues long: uncharacterized protein (119 aa).

This is an uncharacterized protein from Orgyia pseudotsugata (Douglas-fir tussock moth).